The chain runs to 304 residues: Porphobilinogen deaminase (304 aa).

S-(dipyrrolylmethanemethyl)cysteine is present on Cys-241.

This sequence belongs to the HMBS family. Monomer. Dipyrromethane serves as cofactor.

It carries out the reaction 4 porphobilinogen + H2O = hydroxymethylbilane + 4 NH4(+). It functions in the pathway porphyrin-containing compound metabolism; protoporphyrin-IX biosynthesis; coproporphyrinogen-III from 5-aminolevulinate: step 2/4. Its function is as follows. Tetrapolymerization of the monopyrrole PBG into the hydroxymethylbilane pre-uroporphyrinogen in several discrete steps. This Ruthia magnifica subsp. Calyptogena magnifica protein is Porphobilinogen deaminase.